The primary structure comprises 184 residues: Large ribosomal subunit protein bL17 (184 aa).

Residues 126–184 (TRAARAAASKQTADEAQVEETPAEEVTEETAAEETTEAAQADEAPAEEAPVEEKKDEEK) form a disordered region. The segment covering 141–161 (AQVEETPAEEVTEETAAEETT) has biased composition (acidic residues).

It belongs to the bacterial ribosomal protein bL17 family. As to quaternary structure, part of the 50S ribosomal subunit. Contacts protein L32.

The polypeptide is Large ribosomal subunit protein bL17 (Corynebacterium efficiens (strain DSM 44549 / YS-314 / AJ 12310 / JCM 11189 / NBRC 100395)).